The primary structure comprises 176 residues: NADH-quinone oxidoreductase subunit I 1 (176 aa).

2 consecutive 4Fe-4S ferredoxin-type domains span residues 45 to 77 (IVLTRDPEGGERCVACYLCSAACPVDCISMEAT) and 87 to 116 (RWFRINFSRCIFCGLCAEACPTLAIQMTPD). [4Fe-4S] cluster-binding residues include cysteine 57, cysteine 60, cysteine 63, cysteine 67, cysteine 96, cysteine 99, cysteine 102, and cysteine 106.

It belongs to the complex I 23 kDa subunit family. In terms of assembly, NDH-1 is composed of 14 different subunits. Subunits NuoA, H, J, K, L, M, N constitute the membrane sector of the complex. [4Fe-4S] cluster serves as cofactor.

It is found in the cell inner membrane. The enzyme catalyses a quinone + NADH + 5 H(+)(in) = a quinol + NAD(+) + 4 H(+)(out). NDH-1 shuttles electrons from NADH, via FMN and iron-sulfur (Fe-S) centers, to quinones in the respiratory chain. The immediate electron acceptor for the enzyme in this species is believed to be ubiquinone. Couples the redox reaction to proton translocation (for every two electrons transferred, four hydrogen ions are translocated across the cytoplasmic membrane), and thus conserves the redox energy in a proton gradient. The protein is NADH-quinone oxidoreductase subunit I 1 of Geobacter metallireducens (strain ATCC 53774 / DSM 7210 / GS-15).